Reading from the N-terminus, the 99-residue chain is Small ribosomal subunit protein eS24 (99 aa).

This sequence belongs to the eukaryotic ribosomal protein eS24 family. As to quaternary structure, may be present in 2 copies per 70S ribosome. Part of the 30S ribosomal subunit, where it binds 16S rRNA at its canonical site at the bse of the body, as well as a possible second 50S binding site near 23S rRNA helix 45.

This chain is Small ribosomal subunit protein eS24, found in Pyrococcus furiosus (strain ATCC 43587 / DSM 3638 / JCM 8422 / Vc1).